The chain runs to 278 residues: Pantothenate synthetase (278 aa).

27–34 (MGYLHEGH) serves as a coordination point for ATP. Catalysis depends on His34, which acts as the Proton donor. Position 58 (Gln58) interacts with (R)-pantoate. Beta-alanine is bound at residue Gln58. Residue 144–147 (GQKD) participates in ATP binding. Gln150 lines the (R)-pantoate pocket. Residues Val173 and 181-184 (MSSR) contribute to the ATP site.

Belongs to the pantothenate synthetase family. Homodimer.

It is found in the cytoplasm. The enzyme catalyses (R)-pantoate + beta-alanine + ATP = (R)-pantothenate + AMP + diphosphate + H(+). Its pathway is cofactor biosynthesis; (R)-pantothenate biosynthesis; (R)-pantothenate from (R)-pantoate and beta-alanine: step 1/1. In terms of biological role, catalyzes the condensation of pantoate with beta-alanine in an ATP-dependent reaction via a pantoyl-adenylate intermediate. This chain is Pantothenate synthetase, found in Roseiflexus castenholzii (strain DSM 13941 / HLO8).